We begin with the raw amino-acid sequence, 465 residues long: Argininosuccinate lyase (465 aa).

This sequence belongs to the lyase 1 family. Argininosuccinate lyase subfamily.

It is found in the cytoplasm. It carries out the reaction 2-(N(omega)-L-arginino)succinate = fumarate + L-arginine. Its pathway is amino-acid biosynthesis; L-arginine biosynthesis; L-arginine from L-ornithine and carbamoyl phosphate: step 3/3. This is Argininosuccinate lyase from Clostridium botulinum (strain Alaska E43 / Type E3).